Consider the following 513-residue polypeptide: NAD(P)H-quinone oxidoreductase subunit 2 (513 aa).

A run of 14 helical transmembrane segments spans residues 12–32 (TLWPEYIVTITLIVVLLVDLI), 41–61 (LPYLALLGLGIATATLLPMWI), 77–97 (LSVVFRAFILISAALTVLMSV), 104–124 (SLATAEFYVLLLGATLGAMLL), 130–150 (MAMIFVALELLSITSYLLSGY), 165–185 (LLIGAASSGIFLYGMSLLYGF), 199–219 (IVNLGFPALLSLVLVAAGICF), 238–258 (PTPVVAFLSVGSKAAGFALAI), 272–292 (WQTLFVLLAILSMVLGNVVAI), 300–320 (MLAYSSIAQAGYVMIGLAIGT), 328–348 (ILYIGTYLFMNLGAFMAVVLF), 372–392 (LVLSLCLLSLAGIPPLAGFFG), 394–414 (LYLFWAAVQSQAYTLVFFGLV), and 456–476 (AGMLITTVATVVLGILFPPLI). Over residues 494 to 505 (TATPVSRVSTGA) the composition is skewed to polar residues. A disordered region spans residues 494-513 (TATPVSRVSTGAQAPADHGR).

This sequence belongs to the complex I subunit 2 family. NDH-1 can be composed of about 15 different subunits; different subcomplexes with different compositions have been identified which probably have different functions.

The protein localises to the cell inner membrane. It catalyses the reaction a plastoquinone + NADH + (n+1) H(+)(in) = a plastoquinol + NAD(+) + n H(+)(out). The catalysed reaction is a plastoquinone + NADPH + (n+1) H(+)(in) = a plastoquinol + NADP(+) + n H(+)(out). Functionally, NDH-1 shuttles electrons from an unknown electron donor, via FMN and iron-sulfur (Fe-S) centers, to quinones in the respiratory and/or the photosynthetic chain. The immediate electron acceptor for the enzyme in this species is believed to be plastoquinone. Couples the redox reaction to proton translocation, and thus conserves the redox energy in a proton gradient. Cyanobacterial NDH-1 also plays a role in inorganic carbon-concentration. This Gloeobacter violaceus (strain ATCC 29082 / PCC 7421) protein is NAD(P)H-quinone oxidoreductase subunit 2.